Reading from the N-terminus, the 397-residue chain is Staphyloferrin A transporter (397 aa).

12 consecutive transmembrane segments (helical) span residues 10–30, 39–59, 67–87, 93–110, 137–157, 162–182, 213–233, 245–265, 271–292, 296–313, 333–353, and 358–378; these read FLLFLGNWIGQIGLNWFVLTT, IVNFCRLVPILLLSVWAGAIA, LLRITISSSFLVTAILCVLTY, PISVIIIYATLRGILSAV, FIINICRSIGPAIAGVILAVY, TFLAQAICYFIAVLLCLPLHF, IFITSLLIMATGFSYTTLLPV, IFGIAMTMCAIGGIIATLVLP, IGMVNMYYLSSFLFGIALLGVV, IVIMFICITLIGLFSQWA, VLSIIMMDRGMIPLGSLLMSI, and FGIVRTFSIMGISTICITMVF.

The protein belongs to the major facilitator superfamily.

It localises to the cell membrane. Its function is as follows. Involved in staphyloferrin A secretion. The polypeptide is Staphyloferrin A transporter (Staphylococcus aureus (strain NCTC 8325 / PS 47)).